Consider the following 209-residue polypeptide: dTTP/UTP pyrophosphatase (209 aa).

D88 acts as the Proton acceptor in catalysis.

The protein belongs to the Maf family. YhdE subfamily. It depends on a divalent metal cation as a cofactor.

The protein resides in the cytoplasm. It carries out the reaction dTTP + H2O = dTMP + diphosphate + H(+). The catalysed reaction is UTP + H2O = UMP + diphosphate + H(+). Its function is as follows. Nucleoside triphosphate pyrophosphatase that hydrolyzes dTTP and UTP. May have a dual role in cell division arrest and in preventing the incorporation of modified nucleotides into cellular nucleic acids. In Burkholderia mallei (strain ATCC 23344), this protein is dTTP/UTP pyrophosphatase.